Here is a 285-residue protein sequence, read N- to C-terminus: Chemotaxis protein LafT (285 aa).

The next 4 membrane-spanning stretches (helical) occupy residues 4-23 (FLGVLTILVCVFGGYMWAGG), 34-51 (FLIIIGAAAGSLIIGNPP), 171-191 (ALPGFGILAAVGGIIITMQAI), and 201-222 (HVAAALVGTFIGIFGCYCGLDP). Residues 223–285 (LSNAMAQRVK…MEKWLAEQEG (63 aa)) are Cytoplasmic-facing.

It belongs to the MotA family.

The protein resides in the cell inner membrane. Its function is as follows. Required for rotation of the flagellar motor. Probable transmembrane proton channel. This Vibrio parahaemolyticus serotype O3:K6 (strain RIMD 2210633) protein is Chemotaxis protein LafT (lafT).